Here is a 473-residue protein sequence, read N- to C-terminus: UDP-glycosyltransferase 91D2 (473 aa).

The active-site Proton acceptor is the His26. Residue His26 coordinates an anthocyanidin. Asp121 functions as the Charge relay in the catalytic mechanism. Ala344, Gln346, His361, Ser366, and Glu369 together coordinate UDP-alpha-D-glucose. Gly384 lines the an anthocyanidin pocket. Residues Asp385 and Gln386 each contribute to the UDP-alpha-D-glucose site.

Belongs to the UDP-glycosyltransferase family.

The catalysed reaction is steviolmonoside + UDP-alpha-D-glucose = steviolbioside + UDP + H(+). The enzyme catalyses rubusoside + UDP-alpha-D-glucose = stevioside + UDP + H(+). It carries out the reaction stevioside + UDP-alpha-D-glucose = rebaudioside E + UDP + H(+). It catalyses the reaction rebaudioside A + UDP-alpha-D-glucose = rebaudioside D + UDP + H(+). Involved in the biosynthesis of steviol glycosides in leaves. Converts the mono-glycoside steviolmonoside to the bi-glycoside steviolbioside. Converts the bi-glycoside rubusoside to the tri-glycoside stevioside. Converts the tri-glycoside stevioside to the tetra-glycoside rebaudioside E. Converts the tetra-glycoside rebaudioside A to the penta-glycoside rebaudioside E. This Stevia rebaudiana (Stevia) protein is UDP-glycosyltransferase 91D2.